The chain runs to 453 residues: Bifunctional protein GlmU (453 aa).

Residues 1–225 (MNIVILAAGT…GWETLGVNSK (225 aa)) are pyrophosphorylase. Residues 6 to 9 (LAAG), Lys-20, Gln-71, 76 to 77 (GT), 98 to 100 (YGD), Gly-135, Glu-150, Asn-165, and Asn-223 each bind UDP-N-acetyl-alpha-D-glucosamine. A Mg(2+)-binding site is contributed by Asp-100. Asn-223 serves as a coordination point for Mg(2+). Residues 226 to 246 (AQLAELERIHQRNLADALLAA) are linker. The tract at residues 247-453 (GVTLADPARI…GYVRPVKKKS (207 aa)) is N-acetyltransferase. Residues Arg-329 and Lys-347 each coordinate UDP-N-acetyl-alpha-D-glucosamine. His-359 serves as the catalytic Proton acceptor. UDP-N-acetyl-alpha-D-glucosamine is bound by residues Tyr-362 and Asn-373. Acetyl-CoA contacts are provided by residues Ala-376, 382 to 383 (NY), Ser-401, and Ala-419.

It in the N-terminal section; belongs to the N-acetylglucosamine-1-phosphate uridyltransferase family. The protein in the C-terminal section; belongs to the transferase hexapeptide repeat family. As to quaternary structure, homotrimer. The cofactor is Mg(2+).

It localises to the cytoplasm. The enzyme catalyses alpha-D-glucosamine 1-phosphate + acetyl-CoA = N-acetyl-alpha-D-glucosamine 1-phosphate + CoA + H(+). The catalysed reaction is N-acetyl-alpha-D-glucosamine 1-phosphate + UTP + H(+) = UDP-N-acetyl-alpha-D-glucosamine + diphosphate. The protein operates within nucleotide-sugar biosynthesis; UDP-N-acetyl-alpha-D-glucosamine biosynthesis; N-acetyl-alpha-D-glucosamine 1-phosphate from alpha-D-glucosamine 6-phosphate (route II): step 2/2. It functions in the pathway nucleotide-sugar biosynthesis; UDP-N-acetyl-alpha-D-glucosamine biosynthesis; UDP-N-acetyl-alpha-D-glucosamine from N-acetyl-alpha-D-glucosamine 1-phosphate: step 1/1. It participates in bacterial outer membrane biogenesis; LPS lipid A biosynthesis. In terms of biological role, catalyzes the last two sequential reactions in the de novo biosynthetic pathway for UDP-N-acetylglucosamine (UDP-GlcNAc). The C-terminal domain catalyzes the transfer of acetyl group from acetyl coenzyme A to glucosamine-1-phosphate (GlcN-1-P) to produce N-acetylglucosamine-1-phosphate (GlcNAc-1-P), which is converted into UDP-GlcNAc by the transfer of uridine 5-monophosphate (from uridine 5-triphosphate), a reaction catalyzed by the N-terminal domain. This is Bifunctional protein GlmU from Burkholderia pseudomallei (strain K96243).